We begin with the raw amino-acid sequence, 126 residues long: Fatty acid-binding protein, liver (126 aa).

Cholate-binding positions include 54 to 56 (TPN), 99 to 101 (HEQ), and arginine 121.

This sequence belongs to the calycin superfamily. Fatty-acid binding protein (FABP) family.

The protein resides in the cytoplasm. Functionally, FABPs are thought to play a role in the intracellular transport of long-chain fatty acids and their acyl-CoA esters. The protein is Fatty acid-binding protein, liver of Anolis pulchellus (Common grass anole).